Reading from the N-terminus, the 481-residue chain is UDP-N-acetylmuramate--L-alanine ligase (481 aa).

126 to 132 contributes to the ATP binding site; it reads GTHGKTT.

This sequence belongs to the MurCDEF family.

It is found in the cytoplasm. It catalyses the reaction UDP-N-acetyl-alpha-D-muramate + L-alanine + ATP = UDP-N-acetyl-alpha-D-muramoyl-L-alanine + ADP + phosphate + H(+). Its pathway is cell wall biogenesis; peptidoglycan biosynthesis. Functionally, cell wall formation. In Marinobacter nauticus (strain ATCC 700491 / DSM 11845 / VT8) (Marinobacter aquaeolei), this protein is UDP-N-acetylmuramate--L-alanine ligase.